Reading from the N-terminus, the 363-residue chain is Dihydroorotate dehydrogenase (quinone) (363 aa).

FMN contacts are provided by residues 62-66 (AGYDK) and Thr86. Lys66 contributes to the substrate binding site. 111 to 115 (NRLGF) serves as a coordination point for substrate. The FMN site is built by Asn140 and Asn171. Residue Asn171 participates in substrate binding. The active-site Nucleophile is Ser174. Asn176 is a substrate binding site. Residues Lys216 and Ser244 each contribute to the FMN site. 245 to 246 (NT) lines the substrate pocket. FMN-binding positions include Gly267, Gly296, and 317 to 318 (YS).

This sequence belongs to the dihydroorotate dehydrogenase family. Type 2 subfamily. Monomer. FMN is required as a cofactor.

It is found in the cell membrane. It catalyses the reaction (S)-dihydroorotate + a quinone = orotate + a quinol. It functions in the pathway pyrimidine metabolism; UMP biosynthesis via de novo pathway; orotate from (S)-dihydroorotate (quinone route): step 1/1. Functionally, catalyzes the conversion of dihydroorotate to orotate with quinone as electron acceptor. The chain is Dihydroorotate dehydrogenase (quinone) from Allorhizobium ampelinum (strain ATCC BAA-846 / DSM 112012 / S4) (Agrobacterium vitis (strain S4)).